The chain runs to 196 residues: DnaA initiator-associating protein DiaA (196 aa).

Residues 34–196 form the SIS domain; that stretch reads LVQSLLNGNK…DNTLFPHQDV (163 aa).

The protein belongs to the SIS family. DiaA subfamily. Homotetramer; dimer of dimers.

Its function is as follows. Required for the timely initiation of chromosomal replication via direct interactions with the DnaA initiator protein. In Escherichia coli O6:K15:H31 (strain 536 / UPEC), this protein is DnaA initiator-associating protein DiaA.